A 77-amino-acid polypeptide reads, in one-letter code: Conotoxin Vc6b (77 aa).

The N-terminal stretch at 1-22 is a signal peptide; the sequence is MKLTCMMIVAVLFLTANTFVTA. Residues 23-47 constitute a propeptide that is removed on maturation; that stretch reads DDSGNGMENLFPKAGHEMENLEASN. 3 cysteine pairs are disulfide-bonded: C52/C66, C59/C72, and C67/C76.

In terms of tissue distribution, expressed by the venom duct.

It is found in the secreted. This Conus victoriae (Queen Victoria cone) protein is Conotoxin Vc6b.